The chain runs to 324 residues: D-alanine--D-alanine ligase (324 aa).

Residues 121–321 form the ATP-grasp domain; the sequence is NQYLKAFGVR…IKDVMTDIIE (201 aa). 149–204 contacts ATP; sequence MEKIGLPCFIKPSLGGSSFGVTKVKTKEQIQPAIVKAFEEAQEVLVEAFMEGTELT. Mg(2+)-binding residues include Asp275, Glu288, and Asn290.

Belongs to the D-alanine--D-alanine ligase family. Requires Mg(2+) as cofactor. Mn(2+) serves as cofactor.

It localises to the cytoplasm. The catalysed reaction is 2 D-alanine + ATP = D-alanyl-D-alanine + ADP + phosphate + H(+). It participates in cell wall biogenesis; peptidoglycan biosynthesis. Its function is as follows. Cell wall formation. The chain is D-alanine--D-alanine ligase from Bacteroides thetaiotaomicron (strain ATCC 29148 / DSM 2079 / JCM 5827 / CCUG 10774 / NCTC 10582 / VPI-5482 / E50).